A 540-amino-acid polypeptide reads, in one-letter code: Chaperonin GroEL (540 aa).

ATP is bound by residues 29–32 (TLGP), 86–90 (DGTTT), Gly413, and Asp495.

It belongs to the chaperonin (HSP60) family. Forms a cylinder of 14 subunits composed of two heptameric rings stacked back-to-back. Interacts with the co-chaperonin GroES.

The protein localises to the cytoplasm. It catalyses the reaction ATP + H2O + a folded polypeptide = ADP + phosphate + an unfolded polypeptide.. Together with its co-chaperonin GroES, plays an essential role in assisting protein folding. The GroEL-GroES system forms a nano-cage that allows encapsulation of the non-native substrate proteins and provides a physical environment optimized to promote and accelerate protein folding. The chain is Chaperonin GroEL from Caldanaerobacter subterraneus subsp. tengcongensis (strain DSM 15242 / JCM 11007 / NBRC 100824 / MB4) (Thermoanaerobacter tengcongensis).